A 66-amino-acid chain; its full sequence is Protein I177L (66 aa).

Residue Asn11 is glycosylated (N-linked (GlcNAc...) asparagine; by host).

This sequence belongs to the asfivirus I177L family.

Its subcellular location is the virion. The polypeptide is Protein I177L (African swine fever virus (strain Badajoz 1971 Vero-adapted) (Ba71V)).